We begin with the raw amino-acid sequence, 631 residues long: Phosphomethylpyrimidine synthase (631 aa).

Residues asparagine 239, methionine 268, tyrosine 297, histidine 333, 353–355 (SRG), 394–397 (DGLR), and glutamate 433 each bind substrate. Histidine 437 is a Zn(2+) binding site. Position 460 (tyrosine 460) interacts with substrate. Histidine 501 contacts Zn(2+). Cysteine 581, cysteine 584, and cysteine 589 together coordinate [4Fe-4S] cluster.

Belongs to the ThiC family. In terms of assembly, homodimer. [4Fe-4S] cluster is required as a cofactor.

It catalyses the reaction 5-amino-1-(5-phospho-beta-D-ribosyl)imidazole + S-adenosyl-L-methionine = 4-amino-2-methyl-5-(phosphooxymethyl)pyrimidine + CO + 5'-deoxyadenosine + formate + L-methionine + 3 H(+). It participates in cofactor biosynthesis; thiamine diphosphate biosynthesis. Catalyzes the synthesis of the hydroxymethylpyrimidine phosphate (HMP-P) moiety of thiamine from aminoimidazole ribotide (AIR) in a radical S-adenosyl-L-methionine (SAM)-dependent reaction. This is Phosphomethylpyrimidine synthase from Shigella boydii serotype 4 (strain Sb227).